The following is a 372-amino-acid chain: MRAILALEDGSVFIGSHFGATGTEVGEACFNTSMTGYQEVLTDPSYSGQIVTMTYPLIGNYGVNPEDGESGKAQVSGFVVAELAKVHSNWRATESLGPWLEKQGVIGIEGVDTRKIAKHLRSAGAMRACLTTELTPEEAVEAARNAPSMEGCNIVDKIGSHPMTPEEVDALVTGKTLPPAEYDIVAFDFGIKYNILRQLRENGFRVTVVPAHTTAEEVLAMNPDGVFLSNGPGDPATLTDIHREVAALIGKVPMFGICLGHQIISHALGAKTFKLKFGHRGANHPVKDLKTGKISITSQNHGFAVDPDTVPDDVEITLINLNDNTVEGIAHRTLPVFSVQYHPEAAPGPRDPQYLFRDFRKMIAASKRQHAR.

A CPSase region spans residues 1-179; that stretch reads MRAILALEDG…ALVTGKTLPP (179 aa). S45, G231, and G233 together coordinate L-glutamine. The Glutamine amidotransferase type-1 domain maps to 183–369; sequence DIVAFDFGIK…RKMIAASKRQ (187 aa). Catalysis depends on C258, which acts as the Nucleophile. L259, Q262, N300, G302, and F303 together coordinate L-glutamine. Active-site residues include H342 and E344.

The protein belongs to the CarA family. In terms of assembly, composed of two chains; the small (or glutamine) chain promotes the hydrolysis of glutamine to ammonia, which is used by the large (or ammonia) chain to synthesize carbamoyl phosphate. Tetramer of heterodimers (alpha,beta)4.

The enzyme catalyses hydrogencarbonate + L-glutamine + 2 ATP + H2O = carbamoyl phosphate + L-glutamate + 2 ADP + phosphate + 2 H(+). It catalyses the reaction L-glutamine + H2O = L-glutamate + NH4(+). Its pathway is amino-acid biosynthesis; L-arginine biosynthesis; carbamoyl phosphate from bicarbonate: step 1/1. It participates in pyrimidine metabolism; UMP biosynthesis via de novo pathway; (S)-dihydroorotate from bicarbonate: step 1/3. Small subunit of the glutamine-dependent carbamoyl phosphate synthetase (CPSase). CPSase catalyzes the formation of carbamoyl phosphate from the ammonia moiety of glutamine, carbonate, and phosphate donated by ATP, constituting the first step of 2 biosynthetic pathways, one leading to arginine and/or urea and the other to pyrimidine nucleotides. The small subunit (glutamine amidotransferase) binds and cleaves glutamine to supply the large subunit with the substrate ammonia. This Akkermansia muciniphila (strain ATCC BAA-835 / DSM 22959 / JCM 33894 / BCRC 81048 / CCUG 64013 / CIP 107961 / Muc) protein is Carbamoyl phosphate synthase small chain.